The chain runs to 411 residues: MAMATPTTNGSFLLGSGLDCGSSDVARMQGVLARVRGPFTPTQWMELEHQALIYKHIVANAPVPAGLLLPIRRSLHPPVFPHFSSGGILGSSSLGWGSFQLGYSGSADSEPGRCRRTDGKKWRCSRDAVVDQKYCERHINRGRHRSRKHVEGQSSHAAKATVPAIAQPPIGASNGKLSGSHGVSNELTKTLATNRMMLDKANLIERSQDYTNQQHNILQNNTKGDNWSEEMSSQADYAVIPAGSLMNTPQSANLNPIPQQQRCKQSLFGKGIQHDDIQLSISIPVDNSDLPTNYNKAQMDHVVGGSSNGGNNTRASWIPGSWEASIGGPLGEFFTNTSSASDDKGKSRHPPSLNLLADGHTTSPQLQSPTGVLQMTSFSSVPSSTVSSPAGSLCNGLLTSGLVNAQTVQTL.

The QLQ domain occupies 38 to 73 (PFTPTQWMELEHQALIYKHIVANAPVPAGLLLPIRR). One can recognise a WRC domain in the interval 108–152 (DSEPGRCRRTDGKKWRCSRDAVVDQKYCERHINRGRHRSRKHVEG). 2 consecutive short sequence motifs (bipartite nuclear localization signal) follow at residues 113–123 (RCRRTDGKKWR) and 141–148 (RGRHRSRK). The disordered stretch occupies residues 333–369 (FFTNTSSASDDKGKSRHPPSLNLLADGHTTSPQLQSP). Polar residues predominate over residues 360-369 (HTTSPQLQSP).

This sequence belongs to the GRF family.

The protein localises to the nucleus. Functionally, transcription activator that plays a regulatory role in gibberellin-induced stem elongation. This Oryza sativa subsp. japonica (Rice) protein is Growth-regulating factor 7 (GRF7).